The chain runs to 46 residues: Defensin Tk-AMP-D6 (46 aa).

4 cysteine pairs are disulfide-bonded: Cys-3–Cys-46, Cys-14–Cys-34, Cys-20–Cys-40, and Cys-24–Cys-42.

In terms of biological role, plant defense peptide. In Triticum kiharae (Wheat), this protein is Defensin Tk-AMP-D6.